A 387-amino-acid polypeptide reads, in one-letter code: Delta(12)-acyl-lipid-desaturase (387 aa).

Residues 1–31 are disordered; the sequence is MGAGGRMTVPNKWEGEGDEKSQKPVQRVPSA. Positions 13 to 22 are enriched in basic and acidic residues; that stretch reads WEGEGDEKSQ. Transmembrane regions (helical) follow at residues 58 to 78 and 88 to 108; these read SYVL…TTYI and AAWP…WVIA. The Histidine box-1 motif lies at 109 to 113; it reads HECGH. The chain crosses the membrane as a helical span at residues 121-141; the sequence is WVDDCVGLVLHSALLVPYFSW. The short motif at 145–149 is the Histidine box-2 element; sequence HRRHH. Helical transmembrane passes span 183–203, 229–249, and 251–271; these read VMTL…LNVS, IYIS…IAAA, and GLAW…AFLV. The Histidine box-3 motif lies at 319–323; it reads HVAHH.

It belongs to the fatty acid desaturase type 1 family.

The protein resides in the membrane. It functions in the pathway lipid metabolism; polyunsaturated fatty acid biosynthesis. Delta(12)-fatty acid desaturase producing in a heterologous system linoleic acid (18:2(9Z,12Z)) and to a lower extent hexadecadienoic acid (16:2(9Z,12Z)). The sequence is that of Delta(12)-acyl-lipid-desaturase from Punica granatum (Pomegranate).